The chain runs to 264 residues: Merozoite surface protein 2 (264 aa).

An N-terminal signal peptide occupies residues 1–20 (MKVIKTLSIINFFIFVTFNI). N-linked (GlcNAc...) asparagine glycosylation is found at Asn-22 and Asn-36. The polymorphic region stretch occupies residues 44-190 (ANEGSNTNSV…PQTAENENPA (147 aa)). The disordered stretch occupies residues 46–227 (EGSNTNSVGA…QKECTDGNKE (182 aa)). Tandem repeats lie at residues 60 to 91 (ADTI…TPTA) and 92 to 123 (ADTI…TPTA). The segment at 60–123 (ADTIASGSQR…GESQTTTPTA (64 aa)) is 2 X 32 AA perfects repeats. Residues 70-81 (STNSASTSTTNN) show a composition bias toward low complexity. The segment covering 82 to 101 (GESQTTTPTAADTIASGSQR) has biased composition (polar residues). Residues 102–145 (STNSASTSTTNNGESQTTTPTAADTPTATESISPSPPITTTESS) are compositionally biased toward low complexity. A compositionally biased stretch (basic and acidic residues) spans 154–166 (TDGKGEESEKQNE). A glycan (N-linked (GlcNAc...) asparagine) is linked at Asn-213. Basic and acidic residues predominate over residues 217–226 (SQKECTDGNK). Residues Cys-221 and Cys-229 are joined by a disulfide bond. N-linked (GlcNAc...) asparagine glycosylation occurs at Asn-238. Residue Asn-238 is the site of GPI-anchor amidated asparagine attachment. A propeptide spans 239 to 264 (SSNIASINKFVVLISATLVLSFAIFI) (removed in mature form).

It localises to the cell membrane. Functionally, may play a role in the merozoite attachment to the erythrocyte. In Plasmodium falciparum (isolate FC27 / Papua New Guinea), this protein is Merozoite surface protein 2.